The primary structure comprises 388 residues: MKKAVHFGAGNIGRGFIGEILSKNGFEIYFVDTNKAIIDELNTRHSYEIGIASSSPEKISVSGLFGINNGENPEDVIEAIAQADIVTKAIGPNILPYIAELVAKGIQKRKEENKQVQIDIIACENMIGGSEFLEKKVAEYLSDSDKVYLANYIGFPNAAVDRIVPGQKHEDLLYVEVEPFCEWVIDESQIKNKSFKLEGVHYANNLEPFIERKLFSVNSGHATVAYSSAYKGYKIILEGLQHKEILSALKGVQKETRALLLAKWPQYFTEEDLMSYHQMIISRFANPKIIDEVTRVARTPIRKLGYDERFIRPIRELNERGLSYQNHLDIVGKIFAYQDENDSQSVQLQEKLSTMDLQRLIEEVTGLSNKKIILEIELVIKKYKNDSK.

A4–G15 is an NAD(+) binding site.

This sequence belongs to the mannitol dehydrogenase family.

The catalysed reaction is D-mannitol 1-phosphate + NAD(+) = beta-D-fructose 6-phosphate + NADH + H(+). The sequence is that of Mannitol-1-phosphate 5-dehydrogenase from Lactococcus lactis subsp. cremoris (strain SK11).